Consider the following 150-residue polypeptide: Snaclec 7 (150 aa).

An N-terminal signal peptide occupies residues 1–23; that stretch reads MGRFISISFGLLVVFLSLSGTGA. 3 disulfides stabilise this stretch: cysteine 27–cysteine 38, cysteine 55–cysteine 144, and cysteine 121–cysteine 136. The region spanning 34 to 145 is the C-type lectin domain; the sequence is YEGYCYKVFN…CNDPRYFVCK (112 aa).

It belongs to the snaclec family. As to quaternary structure, heterodimer; disulfide-linked.

The protein localises to the secreted. Functionally, interferes with one step of hemostasis (modulation of platelet aggregation, or coagulation cascade, for example). In Daboia siamensis (Eastern Russel's viper), this protein is Snaclec 7.